Reading from the N-terminus, the 241-residue chain is 1-(5-phosphoribosyl)-5-[(5-phosphoribosylamino)methylideneamino] imidazole-4-carboxamide isomerase (241 aa).

The active-site Proton acceptor is Asp10. Residue Asp131 is the Proton donor of the active site.

It belongs to the HisA/HisF family.

The protein localises to the cytoplasm. It carries out the reaction 1-(5-phospho-beta-D-ribosyl)-5-[(5-phospho-beta-D-ribosylamino)methylideneamino]imidazole-4-carboxamide = 5-[(5-phospho-1-deoxy-D-ribulos-1-ylimino)methylamino]-1-(5-phospho-beta-D-ribosyl)imidazole-4-carboxamide. Its pathway is amino-acid biosynthesis; L-histidine biosynthesis; L-histidine from 5-phospho-alpha-D-ribose 1-diphosphate: step 4/9. This is 1-(5-phosphoribosyl)-5-[(5-phosphoribosylamino)methylideneamino] imidazole-4-carboxamide isomerase from Bifidobacterium longum (strain NCC 2705).